The chain runs to 464 residues: MTEEKTPKQIVELLDKYIIGQNEAKKSVAVALYNRYRRLQLPKQMQQDITPKNMLMAGPTGVGKTEIARRLAKIVDAPFVKVEATKFTEVGYVGRDVESMVRDLVEEAVRMEEKDQFEHVKMQATKKANNRLVKLIVPGIKRENRENSMQQMMQMLSGNFNMNQPQDNEEVTDAIRNERLSVADQLNKGLLENREVTIEVEQAPKVNPMGDMMGQMGIDMSSLMGDLMPKKTVKRTLKVSDAREVLIQEESKKLINYDSLYQRAIERTQQNGIIFIDEIDKITAGNKKTSGEVSREGVQRDILPIVEGSTVSTKYGPVSTDHILFIAAGAFAESKPSDLIPELQGRFPIRVELNALTQEDFVKILKDPQNSLLKQYIALLKADGIKLVFTQEAIDRIAQIAFEVNQGTDNIGARRLATILEKLLEDVLYEGPDMNMGEITITQKYVDQKLSDIIINKDLTKFIL.

ATP is bound by residues Ile19, 61–66 (GVGKTE), Asp277, Glu342, and Arg414.

Belongs to the ClpX chaperone family. HslU subfamily. As to quaternary structure, a double ring-shaped homohexamer of HslV is capped on each side by a ring-shaped HslU homohexamer. The assembly of the HslU/HslV complex is dependent on binding of ATP.

The protein localises to the cytoplasm. Its function is as follows. ATPase subunit of a proteasome-like degradation complex; this subunit has chaperone activity. The binding of ATP and its subsequent hydrolysis by HslU are essential for unfolding of protein substrates subsequently hydrolyzed by HslV. HslU recognizes the N-terminal part of its protein substrates and unfolds these before they are guided to HslV for hydrolysis. This is ATP-dependent protease ATPase subunit HslU from Lactobacillus johnsonii (strain CNCM I-12250 / La1 / NCC 533).